Here is a 454-residue protein sequence, read N- to C-terminus: Bifunctional protein GlmU (454 aa).

Residues 1–226 (MALNVVILAA…AVEVEGANNR (226 aa)) are pyrophosphorylase. Residues 8 to 11 (LAAG), Lys22, Gln73, 78 to 79 (GT), 100 to 102 (YGD), Gly137, Glu151, Asn166, and Asn224 contribute to the UDP-N-acetyl-alpha-D-glucosamine site. Residue Asp102 participates in Mg(2+) binding. Asn224 provides a ligand contact to Mg(2+). The segment at 227-247 (VQLAQLERAYQARAAEKLMLE) is linker. The interval 248 to 454 (GANLRDPARI…GWPRPVKLKK (207 aa)) is N-acetyltransferase. Residues Arg330 and Lys348 each contribute to the UDP-N-acetyl-alpha-D-glucosamine site. Residue His360 is the Proton acceptor of the active site. Positions 363 and 374 each coordinate UDP-N-acetyl-alpha-D-glucosamine. Acetyl-CoA is bound by residues Ala377, 383–384 (NY), Ser402, Ala420, and Arg437.

This sequence in the N-terminal section; belongs to the N-acetylglucosamine-1-phosphate uridyltransferase family. It in the C-terminal section; belongs to the transferase hexapeptide repeat family. Homotrimer. It depends on Mg(2+) as a cofactor.

The protein localises to the cytoplasm. The enzyme catalyses alpha-D-glucosamine 1-phosphate + acetyl-CoA = N-acetyl-alpha-D-glucosamine 1-phosphate + CoA + H(+). It carries out the reaction N-acetyl-alpha-D-glucosamine 1-phosphate + UTP + H(+) = UDP-N-acetyl-alpha-D-glucosamine + diphosphate. The protein operates within nucleotide-sugar biosynthesis; UDP-N-acetyl-alpha-D-glucosamine biosynthesis; N-acetyl-alpha-D-glucosamine 1-phosphate from alpha-D-glucosamine 6-phosphate (route II): step 2/2. Its pathway is nucleotide-sugar biosynthesis; UDP-N-acetyl-alpha-D-glucosamine biosynthesis; UDP-N-acetyl-alpha-D-glucosamine from N-acetyl-alpha-D-glucosamine 1-phosphate: step 1/1. It participates in bacterial outer membrane biogenesis; LPS lipid A biosynthesis. Functionally, catalyzes the last two sequential reactions in the de novo biosynthetic pathway for UDP-N-acetylglucosamine (UDP-GlcNAc). The C-terminal domain catalyzes the transfer of acetyl group from acetyl coenzyme A to glucosamine-1-phosphate (GlcN-1-P) to produce N-acetylglucosamine-1-phosphate (GlcNAc-1-P), which is converted into UDP-GlcNAc by the transfer of uridine 5-monophosphate (from uridine 5-triphosphate), a reaction catalyzed by the N-terminal domain. The protein is Bifunctional protein GlmU of Shewanella pealeana (strain ATCC 700345 / ANG-SQ1).